A 172-amino-acid polypeptide reads, in one-letter code: Inorganic pyrophosphatase (172 aa).

Substrate is bound by residues lysine 29, arginine 43, and tyrosine 55. Positions 65, 70, and 102 each coordinate Mg(2+). Tyrosine 141 contacts substrate.

This sequence belongs to the PPase family. In terms of assembly, homohexamer. It depends on Mg(2+) as a cofactor.

It localises to the cytoplasm. It catalyses the reaction diphosphate + H2O = 2 phosphate + H(+). Functionally, catalyzes the hydrolysis of inorganic pyrophosphate (PPi) forming two phosphate ions. The protein is Inorganic pyrophosphatase of Rickettsia prowazekii (strain Madrid E).